The primary structure comprises 524 residues: Probable aminopeptidase NPEPL1 (524 aa).

The Zn(2+) site is built by Lys-260 and Asp-265. Residue Lys-272 is part of the active site. Residues Asp-283, Asp-342, and Glu-344 each contribute to the Zn(2+) site. Residue Arg-346 is part of the active site.

It belongs to the peptidase M17 family. Zn(2+) serves as cofactor. It depends on Mn(2+) as a cofactor.

Its function is as follows. Probably catalyzes the removal of unsubstituted N-terminal amino acids from various peptides. The chain is Probable aminopeptidase NPEPL1 (Npepl1) from Mus musculus (Mouse).